The primary structure comprises 72 residues: Translation initiation factor IF-1 (72 aa).

In terms of domain architecture, S1-like spans 1 to 72; the sequence is MAKSDVIEVE…SKGRITYRFK (72 aa).

It belongs to the IF-1 family. In terms of assembly, component of the 30S ribosomal translation pre-initiation complex which assembles on the 30S ribosome in the order IF-2 and IF-3, IF-1 and N-formylmethionyl-tRNA(fMet); mRNA recruitment can occur at any time during PIC assembly.

It localises to the cytoplasm. Functionally, one of the essential components for the initiation of protein synthesis. Stabilizes the binding of IF-2 and IF-3 on the 30S subunit to which N-formylmethionyl-tRNA(fMet) subsequently binds. Helps modulate mRNA selection, yielding the 30S pre-initiation complex (PIC). Upon addition of the 50S ribosomal subunit IF-1, IF-2 and IF-3 are released leaving the mature 70S translation initiation complex. The protein is Translation initiation factor IF-1 of Levilactobacillus brevis (strain ATCC 367 / BCRC 12310 / CIP 105137 / JCM 1170 / LMG 11437 / NCIMB 947 / NCTC 947) (Lactobacillus brevis).